A 385-amino-acid polypeptide reads, in one-letter code: Chaperone protein DnaJ (385 aa).

Residues 5–70 (DFYDVLGVSR…QSRAAYDQFG (66 aa)) form the J domain. The CR-type zinc-finger motif lies at 143 to 221 (GKKAQVRVPG…CHGAGRVEKE (79 aa)). Positions 156, 159, 173, 176, 195, 198, 209, and 212 each coordinate Zn(2+). CXXCXGXG motif repeat units follow at residues 156-163 (CEVCTGTG), 173-180 (CPTCQGHG), 195-202 (CPTCHGRG), and 209-216 (CTNCHGAG).

The protein belongs to the DnaJ family. Homodimer. Zn(2+) is required as a cofactor.

It localises to the cytoplasm. Functionally, participates actively in the response to hyperosmotic and heat shock by preventing the aggregation of stress-denatured proteins and by disaggregating proteins, also in an autonomous, DnaK-independent fashion. Unfolded proteins bind initially to DnaJ; upon interaction with the DnaJ-bound protein, DnaK hydrolyzes its bound ATP, resulting in the formation of a stable complex. GrpE releases ADP from DnaK; ATP binding to DnaK triggers the release of the substrate protein, thus completing the reaction cycle. Several rounds of ATP-dependent interactions between DnaJ, DnaK and GrpE are required for fully efficient folding. Also involved, together with DnaK and GrpE, in the DNA replication of plasmids through activation of initiation proteins. The chain is Chaperone protein DnaJ from Parvibaculum lavamentivorans (strain DS-1 / DSM 13023 / NCIMB 13966).